The primary structure comprises 177 residues: Large ribosomal subunit protein uL30 (177 aa).

It belongs to the universal ribosomal protein uL30 family. Part of the 50S ribosomal subunit.

The protein is Large ribosomal subunit protein uL30 of Pyrobaculum islandicum (strain DSM 4184 / JCM 9189 / GEO3).